The chain runs to 957 residues: Glycine dehydrogenase (decarboxylating) (957 aa).

K708 is modified (N6-(pyridoxal phosphate)lysine).

It belongs to the GcvP family. The glycine cleavage system is composed of four proteins: P, T, L and H. Pyridoxal 5'-phosphate serves as cofactor.

The catalysed reaction is N(6)-[(R)-lipoyl]-L-lysyl-[glycine-cleavage complex H protein] + glycine + H(+) = N(6)-[(R)-S(8)-aminomethyldihydrolipoyl]-L-lysyl-[glycine-cleavage complex H protein] + CO2. Its function is as follows. The glycine cleavage system catalyzes the degradation of glycine. The P protein binds the alpha-amino group of glycine through its pyridoxal phosphate cofactor; CO(2) is released and the remaining methylamine moiety is then transferred to the lipoamide cofactor of the H protein. This Klebsiella pneumoniae subsp. pneumoniae (strain ATCC 700721 / MGH 78578) protein is Glycine dehydrogenase (decarboxylating).